The following is a 78-amino-acid chain: NAD(P)H-quinone oxidoreductase subunit O (78 aa).

Belongs to the complex I NdhO subunit family. In terms of assembly, NDH-1 can be composed of about 15 different subunits; different subcomplexes with different compositions have been identified which probably have different functions.

The protein resides in the cellular thylakoid membrane. The catalysed reaction is a plastoquinone + NADH + (n+1) H(+)(in) = a plastoquinol + NAD(+) + n H(+)(out). It carries out the reaction a plastoquinone + NADPH + (n+1) H(+)(in) = a plastoquinol + NADP(+) + n H(+)(out). In terms of biological role, NDH-1 shuttles electrons from an unknown electron donor, via FMN and iron-sulfur (Fe-S) centers, to quinones in the respiratory and/or the photosynthetic chain. The immediate electron acceptor for the enzyme in this species is believed to be plastoquinone. Couples the redox reaction to proton translocation, and thus conserves the redox energy in a proton gradient. Cyanobacterial NDH-1 also plays a role in inorganic carbon-concentration. This Prochlorococcus marinus (strain AS9601) protein is NAD(P)H-quinone oxidoreductase subunit O.